The chain runs to 264 residues: Astacin-like metalloprotease toxin 1 (264 aa).

The N-terminal stretch at 1-16 (MIKYIGVFAFLVGGFC) is a signal peptide. Residues 17-51 (HDFETVISNQDPIVDGMRLVEGDMLFDDGPLFTER) constitute a propeptide that is removed on maturation. In terms of domain architecture, Peptidase M12A spans 52–249 (NAVKYDQQLW…VKVNKLYKCP (198 aa)). Cystine bridges form between Cys93-Cys248 and Cys114-Cys135. His143 is a binding site for Zn(2+). The active site involves Glu144. Residues His147 and His153 each coordinate Zn(2+). Residues Asn173 and Asn185 are each glycosylated (N-linked (GlcNAc...) asparagine).

As to quaternary structure, monomer. It depends on Zn(2+) as a cofactor. In terms of tissue distribution, expressed by the venom gland.

It localises to the secreted. With respect to regulation, inhibited by 1,10-phenanthroline. Its function is as follows. Zinc metalloprotease. Provoques deadhesion of endothelial cells from cell cultures, and also degradation of fibronectin, fibrinogen and gelatin in vitro. Its role in the venom is not fully understood but it might act as a spreading factor that facilitates diffusion of other venom toxins. Alternatively, it might be involved in the proteolytic processing of other venom toxins or it might play a role in extra-oral digestion of prey. In Loxosceles intermedia (Brown spider), this protein is Astacin-like metalloprotease toxin 1.